Consider the following 315-residue polypeptide: Cytochrome c biogenesis protein CcsA (315 aa).

Helical transmembrane passes span 15–35, 39–59, 73–93, 97–117, 144–164, 222–242, 257–277, and 283–303; these read SCFL…GFGG, FSFT…LQLI, LYES…YIEV, TLFL…FTDF, VMIA…AYLV, TIGI…IWAN, WAFI…VGGW, and ALVA…VNLL.

The protein belongs to the CcmF/CycK/Ccl1/NrfE/CcsA family. As to quaternary structure, may interact with Ccs1.

The protein localises to the plastid. Its subcellular location is the chloroplast thylakoid membrane. Its function is as follows. Required during biogenesis of c-type cytochromes (cytochrome c6 and cytochrome f) at the step of heme attachment. The sequence is that of Cytochrome c biogenesis protein CcsA from Chlorella vulgaris (Green alga).